A 335-amino-acid chain; its full sequence is Nucleoid-associated protein YejK (335 aa).

The protein belongs to the YejK family.

The protein resides in the cytoplasm. Its subcellular location is the nucleoid. The polypeptide is Nucleoid-associated protein YejK (Escherichia coli (strain K12 / MC4100 / BW2952)).